Here is a 131-residue protein sequence, read N- to C-terminus: Protein NrdI (131 aa).

It belongs to the NrdI family.

Functionally, probably involved in ribonucleotide reductase function. This is Protein NrdI from Bacillus licheniformis (strain ATCC 14580 / DSM 13 / JCM 2505 / CCUG 7422 / NBRC 12200 / NCIMB 9375 / NCTC 10341 / NRRL NRS-1264 / Gibson 46).